We begin with the raw amino-acid sequence, 376 residues long: Delta(12) fatty acid desaturase fat-2 (376 aa).

The next 4 membrane-spanning stretches (helical) occupy residues 45 to 65, 69 to 89, 203 to 223, and 228 to 248; these read ISYLIKDYVLLAGLYFAVPYI, LGWIGLLGWYWAMGIVGSALF, VKCAVSGVACAICAYIAFVLC, and YTFVKYYYIPLLFQGLILVII.

This sequence belongs to the fatty acid desaturase type 1 family.

It is found in the membrane. It carries out the reaction (9Z)-octadecenoyl-CoA + 2 Fe(II)-[cytochrome b5] + O2 + 2 H(+) = (9Z,12Z)-octadecadienoyl-CoA + 2 Fe(III)-[cytochrome b5] + 2 H2O. It catalyses the reaction (9Z)-hexadecenoyl-CoA + 2 Fe(II)-[cytochrome b5] + O2 + 2 H(+) = (9Z,12Z)-hexadecadienoyl-CoA + 2 Fe(III)-[cytochrome b5] + 2 H2O. The catalysed reaction is (9Z,12Z)-octadecadienoyl-CoA + 2 Fe(II)-[cytochrome b5] + O2 + 2 H(+) = (9Z,12Z,15Z)-octadecatrienoyl-CoA + 2 Fe(III)-[cytochrome b5] + 2 H2O. The enzyme catalyses (9Z)-heptadecenoyl-CoA + 2 Fe(II)-[cytochrome b5] + O2 + 2 H(+) = (9Z,12Z)-heptadecadienoyl-CoA + 2 Fe(III)-[cytochrome b5] + 2 H2O. It carries out the reaction (9Z)-pentadecenoyl-CoA + 2 Fe(II)-[cytochrome b5] + O2 + 2 H(+) = (9Z,12Z)-pentadecadienoyl-CoA + 2 Fe(III)-[cytochrome b5] + 2 H2O. It catalyses the reaction (6Z,9Z,12Z)-octadecatrienoyl-CoA + 2 Fe(II)-[cytochrome b5] + O2 + 2 H(+) = (6Z,9Z,12Z,15Z)-octadecatetraenoyl-CoA + 2 Fe(III)-[cytochrome b5] + 2 H2O. The catalysed reaction is (9Z)-tetradecenoyl-CoA + 2 Fe(II)-[cytochrome b5] + O2 + 2 H(+) = (9Z,12Z)-tetradecadienoyl-CoA + 2 Fe(III)-[cytochrome b5] + 2 H2O. Its pathway is lipid metabolism; polyunsaturated fatty acid biosynthesis. Can function as a Delta(12)/Delta(15) bifunctional desaturase and behaves as a nu +3' desaturase. Introduces a double bond in the fatty acid chain three carbons away from an existing double bond to biosynthesize polyunsaturated fatty acids (PUFAs) endogenously (PUFAs are essential for membrane structure and many cellular and physiological processes). Acts on a number of substrates like oleoyl-CoA ((9Z)-octadecenoyl-CoA, 18:1n-9), palmitoleoyl-CoA ((9Z)-hexadecenoyl-CoA, 16:1n-7), and gamma-linolenoyl-CoA ((6Z,9Z,12Z)-octadecatrienoyl-CoA, 18:3n-6), to generate linoleoyl-CoA ((9Z,12Z)-octadecadienoyl-CoA, 18:2n-6), (9Z,12Z)-hexadecadienoyl-CoA (16:2n-4) and (6Z,9Z,12Z,15Z)-octadecatetraenoyl-CoA (18:4n-3) respectively. Unlike plants, Caenorhabditis elegans desaturases seem to use fatty acyl-CoAs as substrates. This is Delta(12) fatty acid desaturase fat-2 (fat-2) from Caenorhabditis elegans.